Consider the following 70-residue polypeptide: Consomatin Mrc3 (70 aa).

Positions 1–22 (MQTAYWVMVMMMVWITAPLSEG) are cleaved as a signal peptide. Residues 23–55 (GKLNDVIRGLVPDDVTPKRILQSLISRRRFDGR) constitute a propeptide that is removed on maturation. The cysteines at positions 62 and 67 are disulfide-linked. A D-tryptophan modification is found at tryptophan 64. Proline 68 carries the 4-hydroxyproline modification. Tyrosine 69 bears the Tyrosine amide mark.

Belongs to the conotoxin C superfamily. Consomatin family. In terms of tissue distribution, expressed by the venom duct.

It is found in the secreted. In terms of biological role, moderately activates human somatostatin receptors (SSTR) with a preferential activation of SSTR1 and SSTR4. In vivo, does not cause behavioral changes in mice within a few minutes of intracranial injection, but causes a progressive loss of movement thereafter. Four to five hours after injection, mice recover, even with the highest dose tested. Shows antinociception and antihyperalgesia activities in two mouse models of acute pain, most probably by acting outside the central nervous system. The protein is Consomatin Mrc3 of Conus mercator (Trader cone).